A 229-amino-acid polypeptide reads, in one-letter code: GTP cyclohydrolase 1 (229 aa).

The segment at 1–26 (MDAKIKPLRGGKPADARPEFQPAELD) is disordered. Positions 118, 121, and 189 each coordinate Zn(2+).

Belongs to the GTP cyclohydrolase I family. As to quaternary structure, toroid-shaped homodecamer, composed of two pentamers of five dimers.

It catalyses the reaction GTP + H2O = 7,8-dihydroneopterin 3'-triphosphate + formate + H(+). Its pathway is cofactor biosynthesis; 7,8-dihydroneopterin triphosphate biosynthesis; 7,8-dihydroneopterin triphosphate from GTP: step 1/1. The chain is GTP cyclohydrolase 1 from Rhodopseudomonas palustris (strain BisB5).